Consider the following 516-residue polypeptide: MATSLQSVIVLDFGSQYTQLIARRIREIGIYSEIFPYHTKAETIRAHQPKAIILSGGPNSVYDEKAFMPDPEVFSLGVPVLGICYGLQAIAKHFGGNVESSSKQEFGRAKMLVNHDESESLLFRDIPDSDVWMSHGDKVTQLPEGFRVTASTANAEVCAIESFGSKAALKVYGLQFHPEVQHSLYGKQLLSNFLIDIAGITPDWSPKSFIQHQIEEIKRVAGDSTVVCGISGGVDSTVAAVLVSKAIGDKLHCVFVDNGLLRKDEAVKVMEFLKPLGLNISLVDASDLFLGRLKGVASPEKKRKIIGRTFIQVFEKNIHDEKFLVQGTLYPDVIESVSVKGPSETIKSHHNVGGLPKRMKLKLIEPLRELFKDEVRAVGRELGIAEDILMRHPFPGPGLAVRVLGSLTRERLDVLRDADQIFIDELKSSGLYSKVWQAFSVLLPVQSVGVMGDKRTYENVLALRAVESTDGMTADWAHLPHDFLAKVSNRIINEVRGINRVVYDISSKPPATIEWE.

A Glutamine amidotransferase type-1 domain is found at 7–203 (SVIVLDFGSQ…LIDIAGITPD (197 aa)). The active-site Nucleophile is the Cys84. Catalysis depends on residues His177 and Glu179. Residues 204-391 (WSPKSFIQHQ…LGIAEDILMR (188 aa)) form the GMPS ATP-PPase domain. Residue 231 to 237 (SGGVDST) coordinates ATP.

Homodimer.

It catalyses the reaction XMP + L-glutamine + ATP + H2O = GMP + L-glutamate + AMP + diphosphate + 2 H(+). It participates in purine metabolism; GMP biosynthesis; GMP from XMP (L-Gln route): step 1/1. Functionally, catalyzes the synthesis of GMP from XMP. The chain is GMP synthase [glutamine-hydrolyzing] from Chlorobaculum tepidum (strain ATCC 49652 / DSM 12025 / NBRC 103806 / TLS) (Chlorobium tepidum).